The chain runs to 362 residues: E3 ubiquitin-protein ligase rififylin (362 aa).

A disordered region spans residues 17–37 (ETPPPQGARTQAYSNPGYSSF). The span at 24–37 (ARTQAYSNPGYSSF) shows a compositional bias: polar residues. The segment at 41–93 (TGSEPSCKACGVHFASTTRKQTCLDCKKNFCMTCSSQEGNGPRLCLLCLRFRA) adopts an FYVE-type zinc-finger fold. One can recognise an SAP 1 domain in the interval 101–120 (LMKMKVKDLRDYLSLHDIST). The tract at residues 162–183 (LTQPQSSTVPPTSPGLPSSPAQ) is disordered. Phosphoserine occurs at positions 225, 228, 231, and 239. An SAP 2 domain is found at 249–263 (IEGLTVRQLKEILAR). The RING-type zinc-finger motif lies at 315–350 (CKICMDSPIDCVLLECGHMVTCTKCGKRMNECPICR).

Interacts with CASP8 and CASP10. Interacts with RIPK1 (via protein kinase domain); involved in RIPK1 ubiquitination. Interacts with PRR5L. Interacts (via RING-type zinc finger) with p53/TP53; involved in p53/TP53 ubiquitination. Interacts (via RING-type zinc finger) with MDM2; the interaction stabilizes MDM2. Post-translationally, autoubiquitinated. Palmitoylated. In terms of processing, undergoes caspase-mediated cleavage upon death-receptor activation, by TNFSF10 for instance. May be mediated by the caspases CASP8 and CASP10 in a negative feedback loop. As to expression, ubiquitous. Detected in cerebrum, cerebellum, midbrain, brain stem, hippocampus, striatum, liver, heart, lung, kidney, muscle, spleen and testis.

The protein resides in the cytoplasm. It localises to the cytosol. The protein localises to the cell membrane. It is found in the recycling endosome membrane. The catalysed reaction is S-ubiquitinyl-[E2 ubiquitin-conjugating enzyme]-L-cysteine + [acceptor protein]-L-lysine = [E2 ubiquitin-conjugating enzyme]-L-cysteine + N(6)-ubiquitinyl-[acceptor protein]-L-lysine.. Its pathway is protein modification; protein ubiquitination. In terms of biological role, E3 ubiquitin-protein ligase that regulates several biological processes through the ubiquitin-mediated proteasomal degradation of various target proteins. Mediates 'Lys-48'-linked polyubiquitination of PRR5L and its subsequent proteasomal degradation thereby indirectly regulating cell migration through the mTORC2 complex. Also ubiquitinates the caspases CASP8 and CASP10, promoting their proteasomal degradation, to negatively regulate apoptosis downstream of death domain receptors. Also negatively regulates the tumor necrosis factor-mediated signaling pathway through targeting of RIPK1 to ubiquitin-mediated proteasomal degradation. Negatively regulates p53/TP53 through its direct ubiquitination and targeting to proteasomal degradation. Indirectly, may also negatively regulate p53/TP53 through ubiquitination and degradation of SFN. May also play a role in endocytic recycling. The sequence is that of E3 ubiquitin-protein ligase rififylin from Rattus norvegicus (Rat).